A 448-amino-acid polypeptide reads, in one-letter code: Homogentisate 1,2-dioxygenase (448 aa).

The active-site Proton acceptor is histidine 303. Histidine 346 and glutamate 352 together coordinate Fe cation. The homogentisate site is built by tyrosine 361 and histidine 382. Histidine 382 is a binding site for Fe cation.

It belongs to the homogentisate dioxygenase family. In terms of assembly, hexamer; dimer of trimers. Fe cation is required as a cofactor.

The enzyme catalyses homogentisate + O2 = 4-maleylacetoacetate + H(+). The protein operates within amino-acid degradation; L-phenylalanine degradation; acetoacetate and fumarate from L-phenylalanine: step 4/6. Its function is as follows. Involved in the catabolism of homogentisate (2,5-dihydroxyphenylacetate or 2,5-OH-PhAc), a central intermediate in the degradation of phenylalanine and tyrosine. Catalyzes the oxidative ring cleavage of the aromatic ring of homogentisate to yield maleylacetoacetate. This Bradyrhizobium diazoefficiens (strain JCM 10833 / BCRC 13528 / IAM 13628 / NBRC 14792 / USDA 110) protein is Homogentisate 1,2-dioxygenase.